A 154-amino-acid polypeptide reads, in one-letter code: MYRMQLLSCIALSLALITNSAPTSSSTKKTQLQLEHLLLDLQMLLNGINNYKNPKLTRMLTFKFYLPKKATELKHLQCLEEELKPLEEVLNLAQSKNFHLRDTRDIISNINVLVLELKGSETTFTCEYDDDTATIIEFLNGWITFCQSIISTLT.

The N-terminal stretch at 1–20 is a signal peptide; it reads MYRMQLLSCIALSLALITNS. A glycan (O-linked (GalNAc...) threonine) is linked at Thr23. An intrachain disulfide couples Cys78 to Cys126.

Belongs to the IL-2 family.

Its subcellular location is the secreted. Functionally, cytokine produced by activated CD4-positive helper T-cells and to a lesser extend activated CD8-positive T-cells and natural killer (NK) cells that plays pivotal roles in the immune response and tolerance. Binds to a receptor complex composed of either the high-affinity trimeric IL-2R (IL2RA/CD25, IL2RB/CD122 and IL2RG/CD132) or the low-affinity dimeric IL-2R (IL2RB and IL2RG). Interaction with the receptor leads to oligomerization and conformation changes in the IL-2R subunits resulting in downstream signaling starting with phosphorylation of JAK1 and JAK3. In turn, JAK1 and JAK3 phosphorylate the receptor to form a docking site leading to the phosphorylation of several substrates including STAT5. This process leads to activation of several pathways including STAT, phosphoinositide-3-kinase/PI3K and mitogen-activated protein kinase/MAPK pathways. Functions as a T-cell growth factor and can increase NK-cell cytolytic activity as well. Promotes strong proliferation of activated B-cells and subsequently immunoglobulin production. Plays a pivotal role in regulating the adaptive immune system by controlling the survival and proliferation of regulatory T-cells, which are required for the maintenance of immune tolerance. Moreover, participates in the differentiation and homeostasis of effector T-cell subsets, including Th1, Th2, Th17 as well as memory CD8-positive T-cells. This Saimiri sciureus (Common squirrel monkey) protein is Interleukin-2 (IL2).